Consider the following 1037-residue polypeptide: Protein brain tumor (1037 aa).

Disordered regions lie at residues 29–63 (SDSP…SRSE) and 159–178 (SNSS…SPPR). Polar residues-rich tracts occupy residues 31 to 42 (SPLTLSGSSPPA) and 54 to 63 (GGSSVKSRSE). Positions 159-175 (SNSSSNSSSSNTSANGS) are enriched in low complexity. The B box-type 1; atypical zinc-finger motif lies at 174 to 222 (GSPPRCTACKSKCSDAVAKCFECQSYLCANCVTAHEFMHCFNGHNVCLI). The Zn(2+) site is built by C179, C182, C204, H208, C328, H331, C351, and H356. The segment at 323–366 (QRQLFCPRHKQELLKFSCRTCCILVCKECIVLEHSTGLHELENV) adopts a B box-type 2 zinc-finger fold. Polar residues predominate over residues 543–554 (GPTGMSLTSNGH). The segment at 543–606 (GPTGMSLTSN…TAHHQQLQAQ (64 aa)) is disordered. Low complexity predominate over residues 565–577 (QSASNSSASSAGS). Residues 579-598 (HHGHHQQSHHHGHHNHHQTA) show a composition bias toward basic residues. 5 NHL repeats span residues 767-810 (HCKF…FDKE), 814-859 (KFQF…YNQY), 860-901 (GQFV…FDQN), 902-944 (GNVL…FNYE), and 945-988 (GQYL…FTQD).

As to quaternary structure, interacts with nanos (nos) and pum. Acts via the formation of a quaternary complex composed of pum, nanos, brat and the 3'-UTR mRNA of hb. Not recruited by nanos and pum to cyclin B 3'-UTR mRNA. Might interact with mira; the interaction seems to be important for brat localization during mitosis. Interacts with Ago1. In terms of tissue distribution, expressed during embryogenesis, mainly in nervous tissues. Expressed in the embryonic central and peripheral nervous systems including the embryonic brain. In third instar larva it is expressed in the larval central nervous system including the brain and the ventral ganglion, in two glands (the ring gland and the salivary gland, and in parts of the foregut) the gastric caeca and the proventriculus.

Its subcellular location is the cytoplasm. The protein resides in the cell cortex. Functionally, a NHL-domain family protein that functions as a translational repressor to inhibit cell proliferation. Plays a central role in translation repression of hb mRNA by being recruited by nanos (nos) and pum to the Nanos Response Element (NRE), a 16 bp sequence in the hb mRNA 3'-UTR. Probably recruited by other proteins to repress translation of other mRNAs in other tissues. Negatively regulates expression of Myc in a 3'-UTR dependent manner in both neural progenitor and epithelial cells. Regulates expression of mei-P26, possibly at transcriptional level. Involved in the regulation of ribosomal RNA synthesis and cell growth. Participates in abdominal segmentation and imaginal disk development. During neuroblast division, segregates asymmetrically and inhibits self-renewal of one of the two daughter cells. Together with the asymmetrically segregating transcription factor prospero ensures that the daughter cell will stop growing, exit the cell cycle, and differentiate into neurons possibly by modulating the function of dm in ganglion mother cells (GMC). Restricts developmental potential of type II intermediary neuronal progenitor (INP) cells playing a role in proliferation and maturation of the neuroblasts. The protein is Protein brain tumor of Drosophila melanogaster (Fruit fly).